Consider the following 208-residue polypeptide: Protein GrpE (208 aa).

Positions 1 to 25 are enriched in basic and acidic residues; it reads MVDNKDFNEELKENIQEELDNETKA. The disordered stretch occupies residues 1–38; it reads MVDNKDFNEELKENIQEELDNETKAENPNIDEEVEEVS. Residues 29–38 show a composition bias toward acidic residues; sequence NIDEEVEEVS.

This sequence belongs to the GrpE family. As to quaternary structure, homodimer.

The protein resides in the cytoplasm. Its function is as follows. Participates actively in the response to hyperosmotic and heat shock by preventing the aggregation of stress-denatured proteins, in association with DnaK and GrpE. It is the nucleotide exchange factor for DnaK and may function as a thermosensor. Unfolded proteins bind initially to DnaJ; upon interaction with the DnaJ-bound protein, DnaK hydrolyzes its bound ATP, resulting in the formation of a stable complex. GrpE releases ADP from DnaK; ATP binding to DnaK triggers the release of the substrate protein, thus completing the reaction cycle. Several rounds of ATP-dependent interactions between DnaJ, DnaK and GrpE are required for fully efficient folding. The protein is Protein GrpE of Clostridium perfringens (strain ATCC 13124 / DSM 756 / JCM 1290 / NCIMB 6125 / NCTC 8237 / Type A).